A 214-amino-acid chain; its full sequence is tRNA (guanine-N(7)-)-methyltransferase (214 aa).

S-adenosyl-L-methionine-binding residues include Glu43, Glu68, Asp95, and Asp117. The active site involves Asp117. Residues Lys121, Asp153, and 191–194 each bind substrate; that span reads TEYE.

This sequence belongs to the class I-like SAM-binding methyltransferase superfamily. TrmB family.

It catalyses the reaction guanosine(46) in tRNA + S-adenosyl-L-methionine = N(7)-methylguanosine(46) in tRNA + S-adenosyl-L-homocysteine. The protein operates within tRNA modification; N(7)-methylguanine-tRNA biosynthesis. In terms of biological role, catalyzes the formation of N(7)-methylguanine at position 46 (m7G46) in tRNA. The protein is tRNA (guanine-N(7)-)-methyltransferase of Brevibacillus brevis (strain 47 / JCM 6285 / NBRC 100599).